A 236-amino-acid polypeptide reads, in one-letter code: Apoptosis regulator Bcl-2 (236 aa).

A BH4 motif is present at residues 10-30 (DNREIVMKYIHYKLSQRGYEW). Threonine 69 carries the post-translational modification Phosphothreonine; by MAPK8. Serine 70 carries the phosphoserine; by MAPK8 and PKC modification. Serine 84 is subject to Phosphoserine; by MAPK8. The BH3 motif lies at 90–104 (VHLTLRRAGDDFSRR). The BH1 motif lies at 133–152 (ELFRDGVNWGRIVAFFEFGG). The BH2 motif lies at 184–199 (TWIQDNGGWDAFVELY). Residues 209–230 (FSWLSLKALLSLALVGACITLG) form a helical membrane-spanning segment.

It belongs to the Bcl-2 family. Forms homodimers, and heterodimers with BAX, BAD, BAK and Bcl-X(L). Heterodimerization with BAX requires intact BH1 and BH2 motifs, and is necessary for anti-apoptotic activity. Component of the complex, at least composed of LRPPRC, BECN1 and BCL2; the interactions prevent BECN1 from forming an autophagy-inducing complex with PIK3C3. Interacts with EI24. Also interacts with APAF1, BBC3, BCL2L1, BNIPL, MRPL41 and TP53BP2. Binding to FKBP8 seems to target BCL2 to the mitochondria and probably interferes with the binding of BCL2 to its targets. Interacts with BAG1 in an ATP-dependent manner. Interacts with RAF1 (the 'Ser-338' and 'Ser-339' phosphorylated form). Interacts (via the BH4 domain) with EGLN3; the interaction prevents the formation of the BAX-BCL2 complex and inhibits the anti-apoptotic activity of BCL2. Interacts with G0S2; this interaction also prevents the formation of the anti-apoptotic BAX-BCL2 complex. Interacts with RTL10/BOP. Interacts with the SCF(FBXO10) complex. Interacts (via the loop between motifs BH4 and BH3) with NLRP1 (via LRR repeats), but not with NLRP2, NLRP3, NLRP4, PYCARD, nor MEFV. Interacts with GIMAP3/IAN4, GIMAP4/IAN1 and GIMAP5/IAN5. Interacts with BCAP31. Interacts with IRF3; the interaction is inhibited by Sendai virus infection. Interacts with BECN1; thereby inhibiting autophagy in non-starvation conditions. Interacts with AMBRA1; thereby inhibiting autophagy. Post-translationally, phosphorylation/dephosphorylation on Ser-70 regulates anti-apoptotic activity. Growth factor-stimulated phosphorylation on Ser-70 by PKC is required for the anti-apoptosis activity and occurs during the G2/M phase of the cell cycle. In the absence of growth factors, BCL2 appears to be phosphorylated by other protein kinases such as ERKs and stress-activated kinases. Phosphorylated by MAPK8/JNK1 at Thr-69, Ser-70 and Ser-84, which stimulates starvation-induced autophagy. Dephosphorylated by protein phosphatase 2A (PP2A). In terms of processing, proteolytically cleaved by caspases during apoptosis. The cleaved protein, lacking the BH4 motif, has pro-apoptotic activity, causes the release of cytochrome c into the cytosol promoting further caspase activity. Monoubiquitinated by PRKN, leading to an increase in its stability. Ubiquitinated by SCF(FBXO10), leading to its degradation by the proteasome.

The protein resides in the mitochondrion outer membrane. It is found in the nucleus membrane. The protein localises to the endoplasmic reticulum membrane. Its subcellular location is the cytoplasm. Functionally, suppresses apoptosis in a variety of cell systems including factor-dependent lymphohematopoietic and neural cells. Regulates cell death by controlling the mitochondrial membrane permeability. Appears to function in a feedback loop system with caspases. Inhibits caspase activity either by preventing the release of cytochrome c from the mitochondria and/or by binding to the apoptosis-activating factor (APAF-1). Also acts as an inhibitor of autophagy: interacts with BECN1 and AMBRA1 during non-starvation conditions and inhibits their autophagy function. May attenuate inflammation by impairing NLRP1-inflammasome activation, hence CASP1 activation and IL1B release. The sequence is that of Apoptosis regulator Bcl-2 (BCL2) from Canis lupus familiaris (Dog).